Reading from the N-terminus, the 553-residue chain is Chaperonin GroEL (553 aa).

Residues 30-33 (TLGP), Lys-51, 87-91 (DGTTT), Gly-415, and Asp-495 each bind ATP.

The protein belongs to the chaperonin (HSP60) family. As to quaternary structure, forms a cylinder of 14 subunits composed of two heptameric rings stacked back-to-back. Interacts with the co-chaperonin GroES.

It localises to the cytoplasm. It catalyses the reaction ATP + H2O + a folded polypeptide = ADP + phosphate + an unfolded polypeptide.. In terms of biological role, together with its co-chaperonin GroES, plays an essential role in assisting protein folding. The GroEL-GroES system forms a nano-cage that allows encapsulation of the non-native substrate proteins and provides a physical environment optimized to promote and accelerate protein folding. This is Chaperonin GroEL from Buchnera aphidicola subsp. Tuberolachnus salignus.